The chain runs to 216 residues: Thylakoid lumenal 16.5 kDa protein, chloroplastic (216 aa).

A chloroplast-targeting transit peptide spans 1 to 38 (MAKSLLCSSTLNPFFSTTLSSSKKNQIAYSGNSKNQTS). Residues 39-73 (SSLLWKRRELSLGFMSSLVAIGLVSNDRRRHDANA) constitute a thylakoid transit peptide.

The protein localises to the plastid. The protein resides in the chloroplast thylakoid lumen. This is Thylakoid lumenal 16.5 kDa protein, chloroplastic from Arabidopsis thaliana (Mouse-ear cress).